The chain runs to 182 residues: MKLADVEERMQKSVEATQHDFNSIRTGRANAALLDRVMVDYYGTETPLRSLANVSTPDATTILIQPYDRSTLASIEKAIQLSDLGLTPNNDGSSVRLNIPPLTTERRKELVKTAAKIAEGGKVAIRNIRRDAIDHIKKAGKAGELTEDEVKDLQEKVQKLTDKYIGKIDALLAEKEKDIMTV.

It belongs to the RRF family.

Its subcellular location is the cytoplasm. In terms of biological role, responsible for the release of ribosomes from messenger RNA at the termination of protein biosynthesis. May increase the efficiency of translation by recycling ribosomes from one round of translation to another. The chain is Ribosome-recycling factor from Thermosynechococcus vestitus (strain NIES-2133 / IAM M-273 / BP-1).